The sequence spans 478 residues: Glycogen synthase (478 aa).

ADP-alpha-D-glucose is bound at residue lysine 15.

Belongs to the glycosyltransferase 1 family. Bacterial/plant glycogen synthase subfamily.

It catalyses the reaction [(1-&gt;4)-alpha-D-glucosyl](n) + ADP-alpha-D-glucose = [(1-&gt;4)-alpha-D-glucosyl](n+1) + ADP + H(+). It participates in glycan biosynthesis; glycogen biosynthesis. In terms of biological role, synthesizes alpha-1,4-glucan chains using ADP-glucose. The protein is Glycogen synthase of Caldicellulosiruptor bescii (strain ATCC BAA-1888 / DSM 6725 / KCTC 15123 / Z-1320) (Anaerocellum thermophilum).